Consider the following 189-residue polypeptide: Elongation factor P (189 aa).

The protein belongs to the elongation factor P family.

It is found in the cytoplasm. The protein operates within protein biosynthesis; polypeptide chain elongation. Its function is as follows. Involved in peptide bond synthesis. Stimulates efficient translation and peptide-bond synthesis on native or reconstituted 70S ribosomes in vitro. Probably functions indirectly by altering the affinity of the ribosome for aminoacyl-tRNA, thus increasing their reactivity as acceptors for peptidyl transferase. This is Elongation factor P from Ehrlichia canis (strain Jake).